Reading from the N-terminus, the 393-residue chain is Phosphoglycerate kinase (393 aa).

Residues 21–23, Arg-37, 60–63, Arg-115, and Arg-148 contribute to the substrate site; these read DLN and HLGR. ATP-binding positions include Lys-199, Glu-321, and 347–350; that span reads GGDT.

This sequence belongs to the phosphoglycerate kinase family. As to quaternary structure, monomer.

It localises to the cytoplasm. It carries out the reaction (2R)-3-phosphoglycerate + ATP = (2R)-3-phospho-glyceroyl phosphate + ADP. It participates in carbohydrate degradation; glycolysis; pyruvate from D-glyceraldehyde 3-phosphate: step 2/5. The chain is Phosphoglycerate kinase from Dechloromonas aromatica (strain RCB).